Reading from the N-terminus, the 59-residue chain is Large ribosomal subunit protein bL32c (59 aa).

The interval Ser-37 to Lys-59 is disordered.

It belongs to the bacterial ribosomal protein bL32 family.

The protein localises to the plastid. It localises to the chloroplast. The chain is Large ribosomal subunit protein bL32c (rpl32) from Zea mays (Maize).